The sequence spans 328 residues: GMP reductase (328 aa).

Cysteine 177 serves as the catalytic Thioimidate intermediate. An NADP(+)-binding site is contributed by 206-229 (IVADGGIRYNGDIAKSIRFGASMV).

This sequence belongs to the IMPDH/GMPR family. GuaC type 2 subfamily.

It carries out the reaction IMP + NH4(+) + NADP(+) = GMP + NADPH + 2 H(+). Catalyzes the irreversible NADPH-dependent deamination of GMP to IMP. It functions in the conversion of nucleobase, nucleoside and nucleotide derivatives of G to A nucleotides, and in maintaining the intracellular balance of A and G nucleotides. The sequence is that of GMP reductase from Levilactobacillus brevis (strain ATCC 367 / BCRC 12310 / CIP 105137 / JCM 1170 / LMG 11437 / NCIMB 947 / NCTC 947) (Lactobacillus brevis).